The sequence spans 627 residues: 1-deoxy-D-xylulose-5-phosphate synthase (627 aa).

Residues histidine 87 and 128-130 each bind thiamine diphosphate; that span reads GHS. Aspartate 159 serves as a coordination point for Mg(2+). Residues 160–161, asparagine 188, phenylalanine 295, and glutamate 375 each bind thiamine diphosphate; that span reads GA. Mg(2+) is bound at residue asparagine 188.

The protein belongs to the transketolase family. DXPS subfamily. In terms of assembly, homodimer. Mg(2+) is required as a cofactor. The cofactor is thiamine diphosphate.

The catalysed reaction is D-glyceraldehyde 3-phosphate + pyruvate + H(+) = 1-deoxy-D-xylulose 5-phosphate + CO2. It participates in metabolic intermediate biosynthesis; 1-deoxy-D-xylulose 5-phosphate biosynthesis; 1-deoxy-D-xylulose 5-phosphate from D-glyceraldehyde 3-phosphate and pyruvate: step 1/1. Catalyzes the acyloin condensation reaction between C atoms 2 and 3 of pyruvate and glyceraldehyde 3-phosphate to yield 1-deoxy-D-xylulose-5-phosphate (DXP). The chain is 1-deoxy-D-xylulose-5-phosphate synthase from Pseudomonas paraeruginosa (strain DSM 24068 / PA7) (Pseudomonas aeruginosa (strain PA7)).